Reading from the N-terminus, the 268-residue chain is 4-hydroxy-tetrahydrodipicolinate reductase (268 aa).

NAD(+) is bound by residues 10–15 (GASGRM) and aspartate 36. Arginine 37 is a binding site for NADP(+). NAD(+) is bound by residues 99 to 101 (GTT) and 123 to 126 (SANM). Histidine 156 acts as the Proton donor/acceptor in catalysis. A (S)-2,3,4,5-tetrahydrodipicolinate-binding site is contributed by histidine 157. Lysine 160 serves as the catalytic Proton donor. 166-167 (GT) lines the (S)-2,3,4,5-tetrahydrodipicolinate pocket.

It belongs to the DapB family.

The protein localises to the cytoplasm. The enzyme catalyses (S)-2,3,4,5-tetrahydrodipicolinate + NAD(+) + H2O = (2S,4S)-4-hydroxy-2,3,4,5-tetrahydrodipicolinate + NADH + H(+). It catalyses the reaction (S)-2,3,4,5-tetrahydrodipicolinate + NADP(+) + H2O = (2S,4S)-4-hydroxy-2,3,4,5-tetrahydrodipicolinate + NADPH + H(+). Its pathway is amino-acid biosynthesis; L-lysine biosynthesis via DAP pathway; (S)-tetrahydrodipicolinate from L-aspartate: step 4/4. Catalyzes the conversion of 4-hydroxy-tetrahydrodipicolinate (HTPA) to tetrahydrodipicolinate. The chain is 4-hydroxy-tetrahydrodipicolinate reductase from Burkholderia thailandensis (strain ATCC 700388 / DSM 13276 / CCUG 48851 / CIP 106301 / E264).